The primary structure comprises 186 residues: Probable chorismate pyruvate-lyase (186 aa).

Substrate-binding residues include Arg80, Leu118, and Glu170.

It belongs to the UbiC family.

The protein localises to the cytoplasm. It catalyses the reaction chorismate = 4-hydroxybenzoate + pyruvate. It participates in cofactor biosynthesis; ubiquinone biosynthesis. Functionally, removes the pyruvyl group from chorismate, with concomitant aromatization of the ring, to provide 4-hydroxybenzoate (4HB) for the ubiquinone pathway. In Pseudomonas savastanoi pv. phaseolicola (strain 1448A / Race 6) (Pseudomonas syringae pv. phaseolicola (strain 1448A / Race 6)), this protein is Probable chorismate pyruvate-lyase.